Reading from the N-terminus, the 175-residue chain is uncharacterized protein (175 aa).

A Macro domain is found at 1 to 173 (MYKNIIKLIS…VYKEKYKKLL (173 aa)).

It belongs to the MacroD-type family.

This is an uncharacterized protein from Fusobacterium nucleatum subsp. nucleatum (strain ATCC 25586 / DSM 15643 / BCRC 10681 / CIP 101130 / JCM 8532 / KCTC 2640 / LMG 13131 / VPI 4355).